A 337-amino-acid polypeptide reads, in one-letter code: Cytochrome P450 monooxygenase dpmpJ (337 aa).

The chain crosses the membrane as a helical span at residues 4-24 (LILHHPYASLAAGILLYFFCL). Asn158 carries an N-linked (GlcNAc...) asparagine glycan.

Belongs to the cytochrome P450 family. It depends on heme as a cofactor.

Its subcellular location is the membrane. It participates in secondary metabolite biosynthesis; terpenoid biosynthesis. Its function is as follows. Cytochrome P450 monooxygenase; part of the gene cluster that mediates the biosynthesis of diterpenoid pyrones. The first step of the pathway is the synthesis of the alpha-pyrone moiety by the polyketide synthase dpmpA via condensation of one acetyl-CoA starter unit with 3 malonyl-CoA units and 2 methylations. The alpha-pyrone is then combined with geranylgeranyl pyrophosphate (GGPP) formed by the GGPP synthase dpmpD through the action of the prenyltransferase dpmpC to yield a linear alpha-pyrone diterpenoid. Subsequent steps in the diterpenoid pyrone biosynthetic pathway involve the decalin core formation, which is initiated by the epoxidation of the C10-C11 olefin by the FAD-dependent oxidoreductase dpmpE, and is followed by a cyclization cascade catalyzed by the terpene cyclase dpmpB. The short chain dehydrogenase/reductase dpmpG then oxidizes the 8S hydroxy group to a ketone and the short chain dehydrogenase/reductase dpmpH reduces the ketone to the 8R hydroxy group to yield higginsianin B. Higginsianin B is further methylated by the methyltransferase dpmpI to produce the intermediate named FDDP B. The cytochrome P450 monooxygenase dpmpJ then oxidizes the C-26 methyl to primary alcohol, producing the final diterpenoid pyrone with a C-26 primary alcohol on the gamma-pyrone moiety named FDDP C. This Macrophomina phaseolina (strain MS6) (Charcoal rot fungus) protein is Cytochrome P450 monooxygenase dpmpJ.